The sequence spans 342 residues: tRNA N6-adenosine threonylcarbamoyltransferase (342 aa).

Fe cation-binding residues include His-111 and His-115. Substrate-binding positions include 134–138 (LVSGG), Asp-167, Gly-180, Asp-184, and Asn-273. Residue Asp-298 coordinates Fe cation.

This sequence belongs to the KAE1 / TsaD family. It depends on Fe(2+) as a cofactor.

Its subcellular location is the cytoplasm. It carries out the reaction L-threonylcarbamoyladenylate + adenosine(37) in tRNA = N(6)-L-threonylcarbamoyladenosine(37) in tRNA + AMP + H(+). Required for the formation of a threonylcarbamoyl group on adenosine at position 37 (t(6)A37) in tRNAs that read codons beginning with adenine. Is involved in the transfer of the threonylcarbamoyl moiety of threonylcarbamoyl-AMP (TC-AMP) to the N6 group of A37, together with TsaE and TsaB. TsaD likely plays a direct catalytic role in this reaction. The protein is tRNA N6-adenosine threonylcarbamoyltransferase of Gloeobacter violaceus (strain ATCC 29082 / PCC 7421).